Consider the following 595-residue polypeptide: MSHIRNFSIIAHIDHGKSTLADRFIQMCGGLSEREMEAQVLDSMDLERERGITIKAHSVTLYYKAKDGITYQLNFIDTPGHVDFTYEVSRSLAACEGALLVVDAGQGVEAQSVANCYTAIEQGLEVMPVLNKMDLPQADPDRVKEEIEKIIGIDATDAVACSAKSGMGVDEVLERLVATIPPPTGDIEAPLQALIIDSWFDNYLGVVSLVRVRHGRVKKGDKILVKSTGKLHLVDSVGVFNPKHSATVDLKAGEVGFIIAGIKDIHGAPVGDTLTLSTTPDVDVLPGFKRIQPQVYAGLFPVSSDDFEDFREALQKLTLNDSSLQYSPESSDALGFGFRCGFLGMLHMEIIQERLEREYNLDLITTAPTVIFELLLKTGETIYVDNPSKLPDLSAIEDMREPIVRANILVPQEHLGNVITLCIEKRGVQHDMLFLGTQVQVSYDLPMNEVVLDFFDRLKSVSRGYASLDYHFDRYQSANLVKLDVLINGEKVDALALIVHRDNAHYKGRALTEKMKELIPRQMFDVAIQAAIGGQIVARTTVKALRKNVLAKCYGGDVSRKRKLLEKQKAGKKRMKQVGNVEIPQEAFLAVLRLE.

The 183-residue stretch at 2–184 folds into the tr-type G domain; sequence SHIRNFSIIA…RLVATIPPPT (183 aa). GTP-binding positions include 14-19 and 131-134; these read DHGKST and NKMD.

This sequence belongs to the TRAFAC class translation factor GTPase superfamily. Classic translation factor GTPase family. LepA subfamily.

It localises to the cell inner membrane. The enzyme catalyses GTP + H2O = GDP + phosphate + H(+). In terms of biological role, required for accurate and efficient protein synthesis under certain stress conditions. May act as a fidelity factor of the translation reaction, by catalyzing a one-codon backward translocation of tRNAs on improperly translocated ribosomes. Back-translocation proceeds from a post-translocation (POST) complex to a pre-translocation (PRE) complex, thus giving elongation factor G a second chance to translocate the tRNAs correctly. Binds to ribosomes in a GTP-dependent manner. This chain is Elongation factor 4, found in Pseudomonas syringae pv. tomato (strain ATCC BAA-871 / DC3000).